Reading from the N-terminus, the 313-residue chain is Homoserine O-succinyltransferase (313 aa).

The active-site Acyl-thioester intermediate is the Cys-142. Positions 163 and 192 each coordinate substrate. Residue His-235 is the Proton acceptor of the active site. The active site involves Glu-237. Residue Arg-249 participates in substrate binding.

Belongs to the MetA family.

It is found in the cytoplasm. It carries out the reaction L-homoserine + succinyl-CoA = O-succinyl-L-homoserine + CoA. It participates in amino-acid biosynthesis; L-methionine biosynthesis via de novo pathway; O-succinyl-L-homoserine from L-homoserine: step 1/1. Transfers a succinyl group from succinyl-CoA to L-homoserine, forming succinyl-L-homoserine. The chain is Homoserine O-succinyltransferase from Vibrio atlanticus (strain LGP32) (Vibrio splendidus (strain Mel32)).